The primary structure comprises 120 residues: Large ribosomal subunit protein uL18 (120 aa).

Belongs to the universal ribosomal protein uL18 family. Part of the 50S ribosomal subunit; part of the 5S rRNA/L5/L18/L25 subcomplex. Contacts the 5S and 23S rRNAs.

Functionally, this is one of the proteins that bind and probably mediate the attachment of the 5S RNA into the large ribosomal subunit, where it forms part of the central protuberance. The sequence is that of Large ribosomal subunit protein uL18 from Nitrobacter winogradskyi (strain ATCC 25391 / DSM 10237 / CIP 104748 / NCIMB 11846 / Nb-255).